The sequence spans 350 residues: Biotin synthase (350 aa).

Positions 41 to 268 constitute a Radical SAM core domain; that stretch reads NEVQVSRLLS…KSRVRLSAGR (228 aa). [4Fe-4S] cluster contacts are provided by cysteine 56, cysteine 60, and cysteine 63. [2Fe-2S] cluster contacts are provided by cysteine 100, cysteine 131, cysteine 191, and arginine 263.

The protein belongs to the radical SAM superfamily. Biotin synthase family. In terms of assembly, homodimer. Requires [4Fe-4S] cluster as cofactor. [2Fe-2S] cluster serves as cofactor.

The enzyme catalyses (4R,5S)-dethiobiotin + (sulfur carrier)-SH + 2 reduced [2Fe-2S]-[ferredoxin] + 2 S-adenosyl-L-methionine = (sulfur carrier)-H + biotin + 2 5'-deoxyadenosine + 2 L-methionine + 2 oxidized [2Fe-2S]-[ferredoxin]. It participates in cofactor biosynthesis; biotin biosynthesis; biotin from 7,8-diaminononanoate: step 2/2. Its function is as follows. Catalyzes the conversion of dethiobiotin (DTB) to biotin by the insertion of a sulfur atom into dethiobiotin via a radical-based mechanism. This chain is Biotin synthase, found in Shewanella pealeana (strain ATCC 700345 / ANG-SQ1).